Reading from the N-terminus, the 264-residue chain is tRNA (guanine-N(1)-)-methyltransferase (264 aa).

S-adenosyl-L-methionine is bound by residues glycine 125 and 145–150 (LGDFVL).

Belongs to the RNA methyltransferase TrmD family. Homodimer.

Its subcellular location is the cytoplasm. The enzyme catalyses guanosine(37) in tRNA + S-adenosyl-L-methionine = N(1)-methylguanosine(37) in tRNA + S-adenosyl-L-homocysteine + H(+). Specifically methylates guanosine-37 in various tRNAs. The chain is tRNA (guanine-N(1)-)-methyltransferase from Burkholderia lata (strain ATCC 17760 / DSM 23089 / LMG 22485 / NCIMB 9086 / R18194 / 383).